The primary structure comprises 98 residues: NADH-ubiquinone oxidoreductase chain 4L (98 aa).

The next 3 membrane-spanning stretches (helical) occupy residues methionine 1–methionine 21, serine 29–leucine 49, and isoleucine 61–valine 81.

It belongs to the complex I subunit 4L family. In terms of assembly, core subunit of respiratory chain NADH dehydrogenase (Complex I) which is composed of 45 different subunits.

Its subcellular location is the mitochondrion inner membrane. The catalysed reaction is a ubiquinone + NADH + 5 H(+)(in) = a ubiquinol + NAD(+) + 4 H(+)(out). Functionally, core subunit of the mitochondrial membrane respiratory chain NADH dehydrogenase (Complex I) which catalyzes electron transfer from NADH through the respiratory chain, using ubiquinone as an electron acceptor. Part of the enzyme membrane arm which is embedded in the lipid bilayer and involved in proton translocation. This Pusa caspica (Caspian seal) protein is NADH-ubiquinone oxidoreductase chain 4L (MT-ND4L).